A 203-amino-acid polypeptide reads, in one-letter code: Enterotoxin-like toxin X (203 aa).

It belongs to the staphylococcal/streptococcal toxin family.

The protein localises to the secreted. Functionally, plays a role in the inhibition of the host innate immune system. Inhibits phagocytosis and killing by human neutrophils by interacting with multiple neutrophil surface glycoproteins in a sialic acid-dependent manner. This Staphylococcus aureus (strain NCTC 8325 / PS 47) protein is Enterotoxin-like toxin X.